The primary structure comprises 147 residues: Hemoglobin subunit beta (147 aa).

Position 2 is an N-acetylvaline (V2). The Globin domain occupies 3 to 147; that stretch reads HLSAEEKGLV…VATALAHKYH (145 aa). At T13 the chain carries Phosphothreonine. S45 bears the Phosphoserine mark. Position 60 is an N6-acetyllysine (K60). H64 is a binding site for heme b. N6-acetyllysine is present on K83. H93 contacts heme b. An S-nitrosocysteine modification is found at C94. K145 carries the post-translational modification N6-acetyllysine.

It belongs to the globin family. Heterotetramer of two alpha chains and two beta chains. As to expression, red blood cells.

Involved in oxygen transport from the lung to the various peripheral tissues. The polypeptide is Hemoglobin subunit beta (HBB) (Scapanus orarius (Coast mole)).